The sequence spans 122 residues: Ribosome-binding factor A (122 aa).

Belongs to the RbfA family. As to quaternary structure, monomer. Binds 30S ribosomal subunits, but not 50S ribosomal subunits or 70S ribosomes.

The protein resides in the cytoplasm. Functionally, one of several proteins that assist in the late maturation steps of the functional core of the 30S ribosomal subunit. Associates with free 30S ribosomal subunits (but not with 30S subunits that are part of 70S ribosomes or polysomes). Required for efficient processing of 16S rRNA. May interact with the 5'-terminal helix region of 16S rRNA. The protein is Ribosome-binding factor A of Anaeromyxobacter sp. (strain Fw109-5).